We begin with the raw amino-acid sequence, 363 residues long: Ribosome-binding ATPase YchF (363 aa).

In terms of domain architecture, OBG-type G spans 3-256 (FKCGIVGLPN…LEDEEKVDFL (254 aa)). 12-17 (NVGKST) contacts ATP. Ser-16 and Thr-36 together coordinate Mg(2+). In terms of domain architecture, TGS spans 278–361 (NLQTYFTAGV…QDGDVMHFRF (84 aa)).

Belongs to the TRAFAC class OBG-HflX-like GTPase superfamily. OBG GTPase family. YchF/OLA1 subfamily. The cofactor is Mg(2+).

In terms of biological role, ATPase that binds to both the 70S ribosome and the 50S ribosomal subunit in a nucleotide-independent manner. This chain is Ribosome-binding ATPase YchF, found in Haemophilus ducreyi (strain 35000HP / ATCC 700724).